The sequence spans 615 residues: Nuclear receptor subfamily 1 group D member 1 (615 aa).

The span at 1–12 (MTTLDSNNNTGG) shows a compositional bias: polar residues. The required for phosphorylation by CSNK1E and cytoplasmic localization stretch occupies residues 1 to 70 (MTTLDSNNNT…TQDPARSFGS (70 aa)). Residues 1–120 (MTTLDSNNNT…SSRVSPSKGT (120 aa)) are disordered. Residues 1–129 (MTTLDSNNNT…TSNITKLNGM (129 aa)) form a modulating region. Residues 14 to 34 (ITYIGSSGSSPSRTSPESLYS) are compositionally biased toward low complexity. The segment covering 35 to 48 (DSSNGSFQSLTQGC) has biased composition (polar residues). The segment at 49-285 (PTYFPPSPTG…PPRSPSPEPT (237 aa)) is crucial for activation of GJA1. Residues S55 and S59 each carry the phosphoserine; by GSK3-beta modification. Positions 70-94 (SAPPSLSDDSSPSSASSSSSSSSSS) are enriched in low complexity. Residues 130–206 (VLLCKVCGDV…VGMSRDAVRF (77 aa)) constitute a DNA-binding region (nuclear receptor). 2 NR C4-type zinc fingers span residues 133–153 (CKVCGDVASGFHYGVHACEGC) and 170–194 (CLKNENCSIVRINRNRCQQCRFKKC). Residues K192 and K193 each carry the N6-acetyllysine; by KAT5 modification. Disordered stretches follow at residues 235–286 (LCPL…EPTM) and 312–337 (PGNFNANHASGSPSATTPHRWESQGC). Over residues 240 to 252 (TSPTPHPTSGSMG) the composition is skewed to low complexity. Over residues 253 to 262 (PSPPPAPAPT) the composition is skewed to pro residues. Position 275 is a phosphothreonine; by CDK1 (T275). The NR LBD domain maps to 285–615 (TMEDVISQVA…KLLSFRVDAQ (331 aa)). The segment covering 312–328 (PGNFNANHASGSPSATT) has biased composition (polar residues). C419 lines the heme pocket. K592 is modified (N6-acetyllysine). H603 contributes to the heme binding site.

Belongs to the nuclear hormone receptor family. NR1 subfamily. In terms of assembly, binds DNA as a monomer or a homodimer. Interacts with NR2E3 and ZNHIT1. Interacts with C1D. Interacts with SP1. Interacts with OPHN1 (via C-terminus). Interacts with PER2; the interaction associates PER2 to BMAL1 promoter region. Interacts with CRY1. Interacts with CCAR2. Interacts with SIAH2. Interacts with FBXW7 and CDK1. Interacts with HUWE1. Interacts with NR0B2. Interacts with NFIL3. Interacts (via domain NR LBD) with HSP90AA1 and HSP90AB1. Ubiquitinated, leading to its proteasomal degradation. Ubiquitinated by the SCF(FBXW7) complex when phosphorylated by CDK1 leading to its proteasomal degradation. Ubiquitinated by SIAH2; leading to its proteasomal degradation. Rapidly ubiquitinated in response to inflammatory triggers and sumoylation is a prerequisite to its ubiquitination. In terms of processing, sumoylated by UBE2I, desumoylated by SENP1, and sumoylation is a prerequisite to its ubiquitination. Post-translationally, phosphorylated by CSNK1E; phosphorylation enhances its cytoplasmic localization. Undergoes lysosome-mediated degradation in a time-dependent manner in the liver. As to expression, expressed during adipocyte differentiation (at protein level). Expressed in skeletal muscle, bladder, lumbar spinal cord, pancreatic islets and hypothalamus. Expressed in developing and adult retina. In the adult retina, predominantly expressed in the outer nuclear layer, where rod and cone cells reside, and also localized to the ganglion cell layer. Expressed in a circadian manner in the liver. Expressed in a circadian manner in the lung with a peak between ZT8 and ZT12.

It is found in the nucleus. The protein resides in the cytoplasm. Its subcellular location is the cell projection. It localises to the dendrite. The protein localises to the dendritic spine. Its function is as follows. Transcriptional repressor which coordinates circadian rhythm and metabolic pathways in a heme-dependent manner. Integral component of the complex transcription machinery that governs circadian rhythmicity and forms a critical negative limb of the circadian clock by directly repressing the expression of core clock components BMAL1, CLOCK and CRY1. Also regulates genes involved in metabolic functions, including lipid and bile acid metabolism, adipogenesis, gluconeogenesis and the macrophage inflammatory response. Acts as a receptor for heme which stimulates its interaction with the NCOR1/HDAC3 corepressor complex, enhancing transcriptional repression. Recognizes two classes of DNA response elements within the promoter of its target genes and can bind to DNA as either monomers or homodimers, depending on the nature of the response element. Binds as a monomer to a response element composed of the consensus half-site motif 5'-[A/G]GGTCA-3' preceded by an A/T-rich 5' sequence (RevRE), or as a homodimer to a direct repeat of the core motif spaced by two nucleotides (RevDR-2). Acts as a potent competitive repressor of ROR alpha (RORA) function and regulates the levels of its ligand heme by repressing the expression of PPARGC1A, a potent inducer of heme synthesis. Regulates lipid metabolism by repressing the expression of APOC3 and by influencing the activity of sterol response element binding proteins (SREBPs); represses INSIG2 which interferes with the proteolytic activation of SREBPs which in turn govern the rhythmic expression of enzymes with key functions in sterol and fatty acid synthesis. Regulates gluconeogenesis via repression of G6PC1 and PEPCK and adipocyte differentiation via repression of PPARG. Regulates glucagon release in pancreatic alpha-cells via the AMPK-NAMPT-SIRT1 pathway and the proliferation, glucose-induced insulin secretion and expression of key lipogenic genes in pancreatic-beta cells. Positively regulates bile acid synthesis by increasing hepatic expression of CYP7A1 via repression of NR0B2 and NFIL3 which are negative regulators of CYP7A1. Modulates skeletal muscle oxidative capacity by regulating mitochondrial biogenesis and autophagy; controls mitochondrial biogenesis and respiration by interfering with the STK11-PRKAA1/2-SIRT1-PPARGC1A signaling pathway. Represses the expression of SERPINE1/PAI1, an important modulator of cardiovascular disease and the expression of inflammatory cytokines and chemokines in macrophages. Represses gene expression at a distance in macrophages by inhibiting the transcription of enhancer-derived RNAs (eRNAs). Plays a role in the circadian regulation of body temperature and negatively regulates thermogenic transcriptional programs in brown adipose tissue (BAT); imposes a circadian oscillation in BAT activity, increasing body temperature when awake and depressing thermogenesis during sleep. In concert with NR2E3, regulates transcriptional networks critical for photoreceptor development and function. In addition to its activity as a repressor, can also act as a transcriptional activator. In the ovarian granulosa cells acts as a transcriptional activator of STAR which plays a role in steroid biosynthesis. In collaboration with SP1, activates GJA1 transcription in a heme-independent manner. Represses the transcription of CYP2B10, CYP4A10 and CYP4A14. Represses the transcription of CES2. Represses and regulates the circadian expression of TSHB in a NCOR1-dependent manner. Negatively regulates the protein stability of NR3C1 and influences the time-dependent subcellular distribution of NR3C1, thereby affecting its transcriptional regulatory activity. Plays a critical role in the circadian control of neutrophilic inflammation in the lung; under resting, non-stress conditions, acts as a rhythmic repressor to limit inflammatory activity whereas in the presence of inflammatory triggers undergoes ubiquitin-mediated degradation thereby relieving inhibition of the inflammatory response. Plays a key role in the circadian regulation of microglial activation and neuroinflammation; suppresses microglial activation through the NF-kappaB pathway in the central nervous system. Plays a role in the regulation of the diurnal rhythms of lipid and protein metabolism in the skeletal muscle via transcriptional repression of genes controlling lipid and amino acid metabolism in the muscle. This chain is Nuclear receptor subfamily 1 group D member 1 (Nr1d1), found in Mus musculus (Mouse).